Consider the following 2261-residue polypeptide: Phospholipid-transporting ATPase ABCA1 (2261 aa).

A lipid anchor (S-palmitoyl cysteine) is attached at C3. N-linked (GlcNAc...) asparagine glycosylation occurs at N14. Residues 22–42 (TCQLLLEVAWPLFIFLILISV) traverse the membrane as a helical segment. C23 is lipidated: S-palmitoyl cysteine. The Extracellular portion of the chain corresponds to 43 to 639 (RLSYPPYEQH…DIFLRVMSRS (597 aa)). The segment at 69–80 (WVQGIICNANNP) is annulus domain 1. C75 and C309 are oxidised to a cystine. Residues N98, N151, N161, N196, N244, N292, N337, and N349 are each glycosylated (N-linked (GlcNAc...) asparagine). Positions 368 to 379 (SRIIWKALKPLL) are annulus domain 2. N-linked (GlcNAc...) asparagine glycosylation is found at N400, N478, N489, and N521. Residues 564–594 (ERTNKIKDGYWDPGPRADPFEDMRYVWGGFA) are gateway domain. 5 consecutive transmembrane segments (helical) span residues 640–660 (MPLF…KSIV), 683–703 (FSWF…LVVI), 716–736 (SVVF…CFLI), 745–765 (LAAA…VLCV), and 777–797 (IFAS…FALF). A glycan (N-linked (GlcNAc...) asparagine) is linked at N820. The helical transmembrane segment at 827–847 (MMLFDTFLYGVMTWYIEAVFP) threads the bilayer. The region spanning 899 to 1131 (VSIQNLVKVY…LGTGYYLTLV (233 aa)) is the ABC transporter 1 domain. Residue 933-940 (GHNGAGKT) participates in ATP binding. Residues 941-961 (TTMSILTGLFPPTSGTAYILG) form a helical membrane-spanning segment. S1042 is subject to Phosphoserine; by PKA. S-palmitoyl cysteine attachment occurs at residues C1110 and C1111. N-linked (GlcNAc...) asparagine glycans are attached at residues N1144 and N1294. Residues 1285-1310 (FTEDDAVDPNDSDIDPESRETDLLSG) are disordered. The span at 1287–1299 (EDDAVDPNDSDID) shows a compositional bias: acidic residues. S1296 carries the post-translational modification Phosphoserine. A helical transmembrane segment spans residues 1351 to 1371 (IVLPAVFVCIALVFSLIVPPF). Residues 1372-1656 (GKYPSLELQP…ALMTTSVDVL (285 aa)) lie on the Extracellular side of the membrane. N-linked (GlcNAc...) asparagine glycosylation is present at N1453. C1463 and C1477 are joined by a disulfide. N-linked (GlcNAc...) asparagine glycans are attached at residues N1499, N1504, and N1637. 6 helical membrane passes run 1657–1677 (VSIC…VFLI), 1703–1723 (FVWD…IFIC), 1735–1755 (LPVL…LMYP), 1768–1788 (VVLT…TFVL), 1802–1822 (ILKS…LIDM), and 1852–1872 (NLFA…LIQY). Positions 1912–2144 (LEIKELTKIY…FGDGYTIVVR (233 aa)) constitute an ABC transporter 2 domain. 1946 to 1953 (GVNGAGKS) serves as a coordination point for ATP. N2044 carries an N-linked (GlcNAc...) asparagine glycan. At S2054 the chain carries Phosphoserine; by PKA. An N-linked (GlcNAc...) asparagine glycan is attached at N2238.

This sequence belongs to the ABC transporter superfamily. ABCA family. As to quaternary structure, interacts with MEGF10. May interact with APOE1; functionally associated with APOE1 in the biogenesis of HDLs. Interacts with ABCA8; this interaction potentiates cholesterol efflux. Interacts with ABCA12 and NR1H2; this interaction is required for ABCA1 localization to the cell surface and is necessary for its normal activity and stability. Phosphorylation on Ser-2054 regulates phospholipid efflux. In terms of processing, palmitoylated by ZDHHC8. Palmitoylation is essential for localization to the plasma membrane. As to expression, widely expressed in adult tissues. Highest levels are found in pregnant uterus and uterus.

The protein localises to the cell membrane. It is found in the endosome. It carries out the reaction ATP + H2O + phospholipidSide 1 = ADP + phosphate + phospholipidSide 2.. The enzyme catalyses a 1,2-diacyl-sn-glycero-3-phosphocholine(out) + ATP + H2O = a 1,2-diacyl-sn-glycero-3-phosphocholine(in) + ADP + phosphate + H(+). It catalyses the reaction a 1,2-diacyl-sn-glycero-3-phospho-L-serine(out) + ATP + H2O = a 1,2-diacyl-sn-glycero-3-phospho-L-serine(in) + ADP + phosphate + H(+). The catalysed reaction is a sphingomyelin(in) + ATP + H2O = a sphingomyelin(out) + ADP + phosphate + H(+). It carries out the reaction cholesterol(in) + ATP + H2O = cholesterol(out) + ADP + phosphate + H(+). With respect to regulation, ATPase activity is decreased by cholesterol and ceramide. ATPase activity is stimulated by phosphatidylcholine and to a lesser degree by phosphatidylserine and sphingomyelin. Phospholipid translocase activity is highly reduced by berylium fluoride and aluminum flouride and reduced by N-ethylmaleimide. Catalyzes the translocation of specific phospholipids from the cytoplasmic to the extracellular/lumenal leaflet of membrane coupled to the hydrolysis of ATP. Thereby, participates in phospholipid transfer to apolipoproteins to form nascent high density lipoproteins/HDLs. Transports preferentially phosphatidylcholine over phosphatidylserine. May play a similar role in the efflux of intracellular cholesterol to apolipoproteins and the formation of nascent high density lipoproteins/HDLs. Translocates phospholipids from the outer face of the plasma membrane and forces it through its gateway and annulus into an elongated hydrophobic tunnel in its extracellular domain. The chain is Phospholipid-transporting ATPase ABCA1 from Mus musculus (Mouse).